The primary structure comprises 205 residues: MTLELLQAQAQNCTACRLMEGRTRVVFGEGNPDAKLMIVGEGPGEEEDKTGRPFVGKAGQLLNRILEAAGIPREEVYITNIVKCRPPQNRAPLPDEAKICTDKWLLKQIELIAPQIIVPLGAVAAEFFLGEKVSITKVRGKWYEWHGIKVFPMFHPAYLLRNPSRAPGSPKHLTWLDIQEVKRALDALPPKERRPVKAVSQEPLF.

Residues C13 and C16 each contribute to the [4Fe-4S] cluster site. Uracil is bound by residues 40-42 (GEG), F54, and N80. Positions 84 and 100 each coordinate [4Fe-4S] cluster. H155 is a binding site for uracil.

Belongs to the uracil-DNA glycosylase (UDG) superfamily. Type 4 (UDGa) family. In terms of assembly, monomer.

It catalyses the reaction Hydrolyzes single-stranded DNA or mismatched double-stranded DNA and polynucleotides, releasing free uracil.. With respect to regulation, product-inhibited by apurinic/apyrimidinic sites. In terms of biological role, removes uracil bases that are present in DNA as a result of either deamination of cytosine or misincorporation of dUMP instead of dTMP. Can remove uracil from double-stranded DNA containing either a U/G, U/A, U/C or U/T base pair as well as from single-stranded DNA. Specifically recognizes uracil that is flipped out from double-stranded DNA. In Thermus thermophilus (strain ATCC 27634 / DSM 579 / HB8), this protein is Type-4 uracil-DNA glycosylase.